The primary structure comprises 98 residues: NADH-ubiquinone oxidoreductase chain 4L (98 aa).

The next 3 membrane-spanning stretches (helical) occupy residues 1 to 21 (MSMVYINIFLAFIMSLMGLLM), 29 to 49 (SLLCLEGMMLSLFIMMAVAIL), and 61 to 81 (IILLVFAACEAALGLSLLVMV).

This sequence belongs to the complex I subunit 4L family. As to quaternary structure, core subunit of respiratory chain NADH dehydrogenase (Complex I) which is composed of 45 different subunits.

It is found in the mitochondrion inner membrane. It catalyses the reaction a ubiquinone + NADH + 5 H(+)(in) = a ubiquinol + NAD(+) + 4 H(+)(out). In terms of biological role, core subunit of the mitochondrial membrane respiratory chain NADH dehydrogenase (Complex I) which catalyzes electron transfer from NADH through the respiratory chain, using ubiquinone as an electron acceptor. Part of the enzyme membrane arm which is embedded in the lipid bilayer and involved in proton translocation. The polypeptide is NADH-ubiquinone oxidoreductase chain 4L (MT-ND4L) (Felis catus (Cat)).